A 616-amino-acid polypeptide reads, in one-letter code: Chaperone protein HtpG (616 aa).

The interval 1–333 (MKKQFDTEVN…CQDLPLNVSR (333 aa)) is a; substrate-binding. The segment at 334-542 (EILQQNKILS…SNDPTYQMQK (209 aa)) is b. The c stretch occupies residues 543–616 (IMLSMGQEVK…INEFLEKDLL (74 aa)).

Belongs to the heat shock protein 90 family. As to quaternary structure, homodimer.

It localises to the cytoplasm. In terms of biological role, molecular chaperone. Has ATPase activity. This chain is Chaperone protein HtpG, found in Borreliella afzelii (strain PKo) (Borrelia afzelii).